A 146-amino-acid polypeptide reads, in one-letter code: MASEAMELNGGVNRRDDPGARPQQGRMSRNTPLNMNHYANKKSAAESMLDIALLMANASQLKTVLELGPSFSFYIPLITLISISLTLQIIVGILLIFIVKWNLNDSSKHYILNLLENIVTALVFIVVVVNVFITAFGVQRPDDKTS.

Residues 1–33 (MASEAMELNGGVNRRDDPGARPQQGRMSRNTPL) form a disordered region. Residues 1 to 75 (MASEAMELNG…ELGPSFSFYI (75 aa)) lie on the Extracellular side of the membrane. Residues 37–66 (HYANKKSAAESMLDIALLMANASQLKTVLE) form a required to induce plasma membrane rupture region. The segment at 41–52 (KKSAAESMLDIA) is helix alpha1. The interval 55–71 (MANASQLKTVLELGPSF) is helix alpha2. An N-linked (GlcNAc...) asparagine glycan is attached at asparagine 57. A helical membrane pass occupies residues 76–100 (PLITLISISLTLQIIVGILLIFIVK). At 101-110 (WNLNDSSKHY) the chain is on the cytoplasmic side. The helical transmembrane segment at 111–135 (ILNLLENIVTALVFIVVVVNVFITA) threads the bilayer. Residues 136-146 (FGVQRPDDKTS) are Extracellular-facing.

Belongs to the ninjurin family. Homooligomer; in response to death stimuli, homooligomerizes into long, highly branched filaments and large, ring-shaped structures in the membrane. In terms of assembly, homodimer; in absence of death stimuli, forms an inactive homodimer. Homooligomer; in response to death stimuli, homooligomerizes into long, highly branched filaments and large, ring-shaped structures in the membrane.

It localises to the cell membrane. It is found in the synaptic cell membrane. Its activity is regulated as follows. In normal conditions, NINJ1 is inactivated. In response to death stimuli, homooligomerizes and disrupts membrane integrity by introducing the hydrophilic faces of alpha1 and alpha2 helices into the hydrophobic membrane. Homooligomerization and ability to mediate plasma membrane rupture is inhibited by glycine; it is unclear whether glycine directly or indirectly inhibits homooligomerization. With respect to regulation, in response to death stimuli, homooligomerizes and disrupts membrane integrity by introducing the hydrophilic faces of alpha1 and alpha2 helices into the hydrophobic membrane. Homooligomerization and ability to mediate plasma membrane rupture is inhibited by glycine; it is unclear whether glycine directly or indirectly inhibits homooligomerization. In normal conditions, NINJ1 is autoinhibited via formation of a homodimer: in the inactive homodimer, the alpha1 and alpha2 helices (residues 41-71) form a single transmembrane region without a kink, in which hydrophilic faces of alpha1 and alpha2 helices are sequestered. Effector of various programmed cell death, such as pyroptosis and necroptosis, which mediates plasma membrane rupture (cytolysis). Oligomerizes in response to death stimuli and forms ring-like structures on the plasma membrane: acts by cutting and shedding membrane disks, like a cookie cutter, leading to membrane damage and loss that cannot be repaired by the cell. Plasma membrane rupture leads to release intracellular molecules named damage-associated molecular patterns (DAMPs) that propagate the inflammatory response. Mechanistically, mediates plasma membrane rupture by introducing hydrophilic faces of 2 alpha helices into the hydrophobic membrane. Induces plasma membrane rupture downstream of Gasdermin (GSDMA, GSDMB, GSDMC, GSDMD, or GSDME) or MLKL during pyroptosis or necroptosis, respectively. Also acts as an effector of PANoptosis and ferroptosis. Induces plasma membrane rupture in response to cell swelling caused by osmotic stress. Acts as a regulator of Toll-like receptor 4 (TLR4) signaling triggered by lipopolysaccharide (LPS) during systemic inflammation; directly binds LPS. Involved in leukocyte migration during inflammation by promoting transendothelial migration of macrophages via homotypic binding. Promotes the migration of monocytes across the brain endothelium to central nervous system inflammatory lesions. Also acts as a homophilic transmembrane adhesion molecule involved in various processes such as axonal growth, cell chemotaxis and angiogenesis. Promotes cell adhesion by mediating homophilic interactions via its extracellular N-terminal adhesion motif (N-NAM). Also involved in striated muscle growth and differentiation. The chain is Ninjurin-1 from Danio rerio (Zebrafish).